The chain runs to 334 residues: MPVSLARNAGMLSVAVLCGGSSPEREVSLAGGKRVADALGRLGYNATVLDLNRESVGQLLAMAPDLVYNALHGVQGEDGCVSGLLDILGLACTHSHVAASSVGMDKVLTKHVLKSLGIDFPKFDVLTKEELLSAKEVLPYPFVIKPVRGGSTIGVHAIFSKSEYLDLSAHADTLEDRMIVEEYVSGQEVQTAVFLGRAIGTMELLFEGRIYSYDAKYVEGLCEHIFPANLPYDIYNLTLEWALKLHQCLGCKTLSRVDFRYDVANKALKLLEINTHPGMTVSSTLPEVLWLRCGLNFDHVVDLIVQDALGIDDSRRAYIDELMGKTVSREPSHV.

Positions 110-306 (KHVLKSLGID…FDHVVDLIVQ (197 aa)) constitute an ATP-grasp domain. 138 to 190 (LPYPFVIKPVRGGSTIGVHAIFSKSEYLDLSAHADTLEDRMIVEEYVSGQEVQ) provides a ligand contact to ATP. Positions 258, 272, and 274 each coordinate Mg(2+).

This sequence belongs to the D-alanine--D-alanine ligase family. The cofactor is Mg(2+). Mn(2+) is required as a cofactor.

The protein resides in the cytoplasm. It carries out the reaction 2 D-alanine + ATP = D-alanyl-D-alanine + ADP + phosphate + H(+). It functions in the pathway cell wall biogenesis; peptidoglycan biosynthesis. Cell wall formation. The chain is D-alanine--D-alanine ligase from Anaplasma marginale (strain Florida).